Consider the following 208-residue polypeptide: Putative thymidylate kinase (208 aa).

The interval 12–19 (GIDGTGTS) is defective ATP-binding.

Belongs to the thymidylate kinase family.

It carries out the reaction dTMP + ATP = dTDP + ADP. The sequence is that of Putative thymidylate kinase (tmk) from Treponema pallidum (strain Nichols).